The primary structure comprises 425 residues: Glutamate-1-semialdehyde 2,1-aminomutase (425 aa).

Residue Lys-265 is modified to N6-(pyridoxal phosphate)lysine.

Belongs to the class-III pyridoxal-phosphate-dependent aminotransferase family. HemL subfamily. Homodimer. The cofactor is pyridoxal 5'-phosphate.

The protein localises to the cytoplasm. The catalysed reaction is (S)-4-amino-5-oxopentanoate = 5-aminolevulinate. The protein operates within porphyrin-containing compound metabolism; protoporphyrin-IX biosynthesis; 5-aminolevulinate from L-glutamyl-tRNA(Glu): step 2/2. The sequence is that of Glutamate-1-semialdehyde 2,1-aminomutase from Desulfatibacillum aliphaticivorans.